The primary structure comprises 97 residues: U6-theraphotoxin-Hhn1a 4 (97 aa).

Residues 1–33 (MLIKQFSRRSKNMKVQILLAFAALFVLAVGSYA) form the signal peptide. Residues 34–61 (SESKKLDLRDALLSAMFSADYQLNPQER) constitute a propeptide that is removed on maturation. 3 cysteine pairs are disulfide-bonded: Cys63–Cys77, Cys70–Cys82, and Cys76–Cys89.

This sequence belongs to the neurotoxin 10 (Hwtx-1) family. 12 (Hntx-12) subfamily. Expressed by the venom gland.

Its subcellular location is the secreted. Ion channel inhibitor. The protein is U6-theraphotoxin-Hhn1a 4 of Cyriopagopus hainanus (Chinese bird spider).